The chain runs to 468 residues: Procollagen C-endopeptidase enhancer 1 (468 aa).

The first 24 residues, 1–24, serve as a signal peptide directing secretion; sequence MLPAALTSLLGPFLLAWVLPLARG. Asn28 is a glycosylation site (N-linked (GlcNAc...) asparagine). 4 disulfides stabilise this stretch: Cys36–Cys62, Cys89–Cys111, Cys158–Cys185, and Cys212–Cys235. 2 CUB domains span residues 36–148 and 158–272; these read CGGD…YSGR and CGGR…YRTL. Phosphothreonine is present on Thr41. Phosphoserine is present on Ser49. Residues 271 to 341 form a disordered region; it reads TLPRDAVEKE…VAPDAPSITC (71 aa). A compositionally biased stretch (basic and acidic residues) spans 272–281; the sequence is LPRDAVEKES. Intrachain disulfides connect Cys341–Cys409 and Cys356–Cys460. Positions 341 to 460 constitute an NTR domain; it reads CPKQYKRSGT…ILSNLSKRKC (120 aa). N-linked (GlcNAc...) asparagine glycosylation occurs at Asn454.

Interacts with EFEMP2. Expressed at highest levels in collagen-rich tissues, especially tendon. Also expressed in cornea and sterna.

The protein resides in the secreted. In terms of biological role, binds to the C-terminal propeptide of type I procollagen and enhances procollagen C-proteinase activity. This chain is Procollagen C-endopeptidase enhancer 1 (Pcolce), found in Rattus norvegicus (Rat).